A 918-amino-acid polypeptide reads, in one-letter code: Signal transduction histidine-protein kinase BarA (918 aa).

Topologically, residues methionine 1–methionine 10 are cytoplasmic. A helical transmembrane segment spans residues methionine 11–valine 31. Residues histidine 32 to lysine 175 lie on the Periplasmic side of the membrane. The helical transmembrane segment at glutamate 176–tryptophan 196 threads the bilayer. Residues arginine 197–glycine 918 are Cytoplasmic-facing. An HAMP domain is found at arginine 200–glutamate 252. One can recognise a Histidine kinase domain in the interval asparagine 299 to leucine 520. Histidine 302 is modified (phosphohistidine; by autocatalysis). Residues threonine 669 to lysine 785 form the Response regulatory domain. Aspartate 718 bears the 4-aspartylphosphate mark. The HPt domain occupies lysine 822 to glycine 918. Histidine 861 bears the Phosphohistidine mark.

Post-translationally, activation requires a sequential transfer of a phosphate group from a His in the primary transmitter domain, to an Asp in the receiver domain and to a His in the secondary transmitter domain.

It localises to the cell inner membrane. It carries out the reaction ATP + protein L-histidine = ADP + protein N-phospho-L-histidine.. Functionally, member of the two-component regulatory system UvrY/BarA involved in the regulation of carbon metabolism via the CsrA/CsrB regulatory system. Phosphorylates UvrY, probably via a four-step phosphorelay. This chain is Signal transduction histidine-protein kinase BarA (barA), found in Shigella flexneri.